The sequence spans 831 residues: Phenylalanine--tRNA ligase beta subunit (831 aa).

The tRNA-binding domain maps to 42 to 157 (ADISGPIVVG…GFAEPGTKAD (116 aa)). Residues 408–483 (VPREPIVVRA…RNEGYENIPA (76 aa)) form the B5 domain. Residues D461, D467, E470, and E471 each coordinate Mg(2+). In terms of domain architecture, FDX-ACB spans 737 to 830 (STYPVATQDV…AAERTGAVLR (94 aa)).

The protein belongs to the phenylalanyl-tRNA synthetase beta subunit family. Type 1 subfamily. As to quaternary structure, tetramer of two alpha and two beta subunits. It depends on Mg(2+) as a cofactor.

It localises to the cytoplasm. It carries out the reaction tRNA(Phe) + L-phenylalanine + ATP = L-phenylalanyl-tRNA(Phe) + AMP + diphosphate + H(+). The sequence is that of Phenylalanine--tRNA ligase beta subunit from Thermobifida fusca (strain YX).